A 599-amino-acid chain; its full sequence is Putative sensor histidine kinase NtrY-like (599 aa).

The next 4 membrane-spanning stretches (helical) occupy residues 17–37 (VLIFTLATAAIIFACATFYVI), 44–64 (FSTIIGFLLVDLAIFLILGVV), 85–105 (IVIAFSLVAAIPTIIVSVFSV), and 285–305 (IMFIFIALLLLFVAISFGVIF). Residues 307-361 (AKIVKPIKKLVTATDNVKDGDLTVQVPENEVDKDEIGTLYVAFNRMIKQLSRQQR) enclose the HAMP domain. Positions 378–589 (KVAHEIKNPL…IIDIKFDLKE (212 aa)) constitute a Histidine kinase domain. At His-381 the chain carries Phosphohistidine; by autocatalysis.

Its subcellular location is the cell membrane. The catalysed reaction is ATP + protein L-histidine = ADP + protein N-phospho-L-histidine.. Its function is as follows. Member of the two-component regulatory system RC0948/RC0849. This chain is Putative sensor histidine kinase NtrY-like, found in Rickettsia conorii (strain ATCC VR-613 / Malish 7).